A 20-amino-acid polypeptide reads, in one-letter code: Cytotoxin drCT-1 (20 aa).

This sequence belongs to the three-finger toxin family. Short-chain subfamily. Type IA cytotoxin sub-subfamily. As to quaternary structure, monomer in solution; Homodimer and oligomer in the presence of negatively charged lipids forming a pore with a size ranging between 20 and 30 Angstroms. As to expression, expressed by the venom gland.

It is found in the secreted. The protein resides in the target cell membrane. In terms of biological role, this three-finger cytotoxin has antiproliferative, cytotoxic and apoptotic activities. Both in vivo and in vitro experimental results suggests that this protein possess anticancer potential. Also shows neurotoxicity, cardiotoxicity and myotoxicity. This is Cytotoxin drCT-1 from Daboia russelii (Russel's viper).